Here is a 252-residue protein sequence, read N- to C-terminus: 3-dehydroquinate dehydratase (252 aa).

3-dehydroquinate is bound by residues 46–48 (EWR) and Arg82. The active-site Proton donor/acceptor is the His143. Lys170 functions as the Schiff-base intermediate with substrate in the catalytic mechanism. The 3-dehydroquinate site is built by Arg212, Ser231, and Gln235.

The protein belongs to the type-I 3-dehydroquinase family. Homodimer.

It carries out the reaction 3-dehydroquinate = 3-dehydroshikimate + H2O. Its pathway is metabolic intermediate biosynthesis; chorismate biosynthesis; chorismate from D-erythrose 4-phosphate and phosphoenolpyruvate: step 3/7. Functionally, involved in the third step of the chorismate pathway, which leads to the biosynthesis of aromatic amino acids. Catalyzes the cis-dehydration of 3-dehydroquinate (DHQ) and introduces the first double bond of the aromatic ring to yield 3-dehydroshikimate. This is 3-dehydroquinate dehydratase from Listeria innocua serovar 6a (strain ATCC BAA-680 / CLIP 11262).